The following is a 444-amino-acid chain: 3-isopropylmalate dehydratase large subunit (444 aa).

[4Fe-4S] cluster contacts are provided by Cys-348, Cys-408, and Cys-411.

Belongs to the aconitase/IPM isomerase family. LeuC type 1 subfamily. Heterodimer of LeuC and LeuD. [4Fe-4S] cluster is required as a cofactor.

The enzyme catalyses (2R,3S)-3-isopropylmalate = (2S)-2-isopropylmalate. It functions in the pathway amino-acid biosynthesis; L-leucine biosynthesis; L-leucine from 3-methyl-2-oxobutanoate: step 2/4. Its function is as follows. Catalyzes the isomerization between 2-isopropylmalate and 3-isopropylmalate, via the formation of 2-isopropylmaleate. The protein is 3-isopropylmalate dehydratase large subunit of Buchnera aphidicola subsp. Uroleucon ambrosiae.